The following is a 355-amino-acid chain: 3-isopropylmalate dehydrogenase (355 aa).

Residues R90, R100, R128, and D222 each coordinate substrate. Mg(2+) contacts are provided by D222, D246, and D250. 280 to 292 (GSAPDIAGKGVAN) serves as a coordination point for NAD(+).

Belongs to the isocitrate and isopropylmalate dehydrogenases family. LeuB type 1 subfamily. In terms of assembly, homodimer. It depends on Mg(2+) as a cofactor. The cofactor is Mn(2+).

The protein resides in the cytoplasm. It catalyses the reaction (2R,3S)-3-isopropylmalate + NAD(+) = 4-methyl-2-oxopentanoate + CO2 + NADH. It functions in the pathway amino-acid biosynthesis; L-leucine biosynthesis; L-leucine from 3-methyl-2-oxobutanoate: step 3/4. Functionally, catalyzes the oxidation of 3-carboxy-2-hydroxy-4-methylpentanoate (3-isopropylmalate) to 3-carboxy-4-methyl-2-oxopentanoate. The product decarboxylates to 4-methyl-2 oxopentanoate. In Cupriavidus metallidurans (strain ATCC 43123 / DSM 2839 / NBRC 102507 / CH34) (Ralstonia metallidurans), this protein is 3-isopropylmalate dehydrogenase.